The chain runs to 565 residues: Ubiquitin carboxyl-terminal hydrolase 39 (565 aa).

2 stretches are compositionally biased toward basic and acidic residues: residues 1-21 (MSGR…ESES) and 28-39 (VKRERDREREPE). 2 disordered regions span residues 1 to 61 (MSGR…SARE) and 75 to 95 (EREV…NGRV). Position 46 is a phosphoserine (S46). K51 participates in a covalent cross-link: Glycyl lysine isopeptide (Lys-Gly) (interchain with G-Cter in SUMO2). A Phosphoserine modification is found at S82. Over residues 85-95 (EREVRAKNGRV) the composition is skewed to basic and acidic residues. Residues 103 to 200 (RHCPYLDTIN…YVLKPTFTKQ (98 aa)) form a UBP-type; degenerate zinc finger. Residues C136, C139, H155, and H161 each coordinate Zn(2+). The region spanning 225–555 (VGLNNIKAND…EAYIQIWKRR (331 aa)) is the USP domain.

Belongs to the peptidase C19 family. As to quaternary structure, the U4/U6-U5 tri-snRNP complex is a building block of the precatalytic spliceosome (spliceosome B complex). Component of the U4/U6-U5 tri-snRNP complex composed of the U4, U6 and U5 snRNAs and at least PRPF3, PRPF4, PRPF6, PRPF8, PRPF31, SNRNP200, TXNL4A, SNRNP40, SNRPB, SNRPD1, SNRPD2, SNRPD3, SNRPE, SNRPF, SNRPG, DDX23, CD2BP2, PPIH, SNU13, EFTUD2, SART1 and USP39, plus LSM2, LSM3, LSM4, LSM5, LSM6, LSM7 and LSM8.

It is found in the nucleus. It catalyses the reaction Thiol-dependent hydrolysis of ester, thioester, amide, peptide and isopeptide bonds formed by the C-terminal Gly of ubiquitin (a 76-residue protein attached to proteins as an intracellular targeting signal).. Functionally, deubiquitinating enzyme that plays a role in many cellular processes including cellular antiviral response, epithelial morphogenesis, DNA repair or B-cell development. Plays a role in pre-mRNA splicing as a component of the U4/U6-U5 tri-snRNP, one of the building blocks of the precatalytic spliceosome. Specifically regulates immunoglobulin gene rearrangement in a spliceosome-dependent manner, which involves modulating chromatin interactions at the Igh locus and therefore plays an essential role in B-cell development. Regulates AURKB mRNA levels, and thereby plays a role in cytokinesis and in the spindle checkpoint. Regulates apoptosis and G2/M cell cycle checkpoint in response to DNA damage by deubiquitinating and stabilizing CHK2. Also plays an important role in DNA repair by controlling the recruitment of XRCC4/LIG4 to DNA double-strand breaks for non-homologous end-joining repair. Participates in antiviral activity by affecting the type I IFN signaling by stabilizing STAT1 and decreasing its 'Lys-6'-linked ubiquitination. Contributes to non-canonical Wnt signaling during epidermal differentiation. Acts as a negative regulator NF-kappa-B activation through deubiquitination of 'Lys-48'-linked ubiquitination of NFKBIA. This Homo sapiens (Human) protein is Ubiquitin carboxyl-terminal hydrolase 39.